The chain runs to 410 residues: NIPA-like protein 3 (410 aa).

A disordered region spans residues 1-24; sequence MDGAHSAGLQLQPLPPTSGATSTS. 9 helical membrane-spanning segments follow: residues 37 to 57, 80 to 100, 105 to 125, 139 to 159, 175 to 195, 206 to 226, 244 to 264, 275 to 295, and 304 to 324; these read NLIGALLAIFGHLVVSIALNL, WWLGLLLLLLGELGVFASYAF, LIVPLSAVSVIASAIIGIIFI, VLSFVGCGLAIVGTYLLVTFA, LVSWPFLLYMLVAIVLFCLLL, IVVILLLVALLGSMTVVTVKA, PIFYVMFVCMVATAIYQATFL, LIASVGYILSTTAAITAGAIF, and ALHICMFALGCLIAFLGVFLI. Phosphoserine is present on S376. Residues 389-410 are disordered; that stretch reads EEHSSRSTPGVPYRVLEHTKKE.

Belongs to the NIPA family.

It localises to the membrane. This chain is NIPA-like protein 3 (Nipal3), found in Mus musculus (Mouse).